A 431-amino-acid polypeptide reads, in one-letter code: Putative malic acid transport protein (431 aa).

10 helical membrane-spanning segments follow: residues 30-50 (FTWAWFASAMGTGGIGMVTSL), 62-82 (GKIIFIFQLSILTLYICCITF), 101-121 (VLFMPTALLAIATSISNLYPY), 136-156 (ILYWIFVAVACIFVISLFYSL), 167-187 (IIPALVLPIFPCMICGVIASA), 201-221 (VVAGIAFQGLGFWIYIIVYAV), 239-259 (GMFILVSPPSFTGLTLLDLAF), 284-304 (FMALFMIGLGIFNFCLAFVSV), 318-338 (VSWFAMIFANVGLVMDVQELG), and 346-366 (VCIVGQVCGVTITIVWIILIL). Residues 402–424 (EEEKDEAERSKRKAEESDGKTTR) show a composition bias toward basic and acidic residues. The segment at 402-431 (EEEKDEAERSKRKAEESDGKTTRELTSGGL) is disordered.

Belongs to the tellurite-resistance/dicarboxylate transporter (TDT) family.

Its subcellular location is the membrane. This is Putative malic acid transport protein from Schizosaccharomyces pombe (strain 972 / ATCC 24843) (Fission yeast).